Here is a 380-residue protein sequence, read N- to C-terminus: DNA replication and repair protein RecF (380 aa).

30-37 contributes to the ATP binding site; that stretch reads GPNGFGKT.

It belongs to the RecF family.

It is found in the cytoplasm. In terms of biological role, the RecF protein is involved in DNA metabolism; it is required for DNA replication and normal SOS inducibility. RecF binds preferentially to single-stranded, linear DNA. It also seems to bind ATP. This chain is DNA replication and repair protein RecF, found in Mycobacterium sp. (strain KMS).